We begin with the raw amino-acid sequence, 509 residues long: DNA nucleotidylexotransferase (509 aa).

Positions methionine 1–alanine 24 are disordered. A Nuclear localization signal motif is present at residues proline 11–arginine 17. The BRCT domain maps to proline 27–glutamine 124. Serine 134 carries the phosphoserine modification. The interval serine 151–alanine 509 is mediates interaction with DNTTIP2. The tract at residues valine 258 to threonine 262 is involved in DNA binding. A 2'-deoxyribonucleoside 5'-triphosphate is bound by residues glycine 333 to lysine 338 and histidine 342 to aspartate 345. Aspartate 343, aspartate 345, and aspartate 433 together coordinate Mg(2+). An a 2'-deoxyribonucleoside 5'-triphosphate-binding site is contributed by glycine 448–tryptophan 449.

Belongs to the DNA polymerase type-X family. Interacts with PRP19 and DNTTIP1. Forms a ternary complex with DNTTIP2 and core histone. Released from this complex by PCNA. Interacts with TRERF1. Requires Mg(2+) as cofactor.

It localises to the nucleus. The catalysed reaction is DNA(n) + a 2'-deoxyribonucleoside 5'-triphosphate = DNA(n+1) + diphosphate. Template-independent DNA polymerase which catalyzes the random addition of deoxynucleoside 5'-triphosphate to the 3'-end of a DNA initiator. One of the in vivo functions of this enzyme is the addition of nucleotides at the junction (N region) of rearranged Ig heavy chain and T-cell receptor gene segments during the maturation of B- and T-cells. This is DNA nucleotidylexotransferase (DNTT) from Homo sapiens (Human).